A 70-amino-acid polypeptide reads, in one-letter code: Myotoxin (70 aa).

The N-terminal stretch at 1-22 (MKILYLLFAFLFLAFLSEPGNA) is a signal peptide. 3 cysteine pairs are disulfide-bonded: Cys26–Cys58, Cys33–Cys52, and Cys40–Cys59.

Belongs to the crotamine-myotoxin family. As to quaternary structure, monomer. In terms of tissue distribution, expressed by the venom gland.

It localises to the secreted. Functionally, cationic peptide that possesses multiple functions. It acts as a cell-penetrating peptide (CPP), and as a potent voltage-gated potassium channel (Kv) inhibitor. It exhibits antimicrobial activities, hind limb paralysis, and severe muscle necrosis by a non-enzymatic mechanism. The sequence is that of Myotoxin from Crotalus helleri (Southern pacific rattlesnake).